Reading from the N-terminus, the 254-residue chain is D-aminoacyl-tRNA deacylase (254 aa).

The interval 61-82 (KPTLTVHTPGNLTDDNSHGGNP) is disordered. A compositionally biased stretch (polar residues) spans 65-74 (TVHTPGNLTD).

This sequence belongs to the DtdA deacylase family. As to quaternary structure, monomer. The cofactor is Zn(2+).

The enzyme catalyses a D-aminoacyl-tRNA + H2O = a tRNA + a D-alpha-amino acid + H(+). The catalysed reaction is glycyl-tRNA(Ala) + H2O = tRNA(Ala) + glycine + H(+). Functionally, D-aminoacyl-tRNA deacylase with broad substrate specificity. By recycling D-aminoacyl-tRNA to D-amino acids and free tRNA molecules, this enzyme counteracts the toxicity associated with the formation of D-aminoacyl-tRNA entities in vivo. The chain is D-aminoacyl-tRNA deacylase from Methanococcus maripaludis (strain DSM 14266 / JCM 13030 / NBRC 101832 / S2 / LL).